The primary structure comprises 238 residues: MIAFIVLLSLAAVLQQSSGTADFASESSNKKNYQKEIVDKHNALRRSVKPTARNMLQMKWNSRAAQNAKRWANRCTFAHSPPNKRTVGKLRCGENIFMSSQPFPWSGVVQAWYDEIKNFVYGIGAKPPGSVIGHYTQVVWYKSYLIGCASAKCSSSKYLYVCQYCPAGNIRGSIATPYKSGPPCADCPSACVNKLCTNPCKRNNDFSNCKSLAKKSKCQTEWIKKKCPASCFCHNKII.

Residues 1 to 19 (MIAFIVLLSLAAVLQQSSG) form the signal peptide. Positions 20–27 (TADFASES) are excised as a propeptide. In terms of domain architecture, SCP spans 38 to 164 (VDKHNALRRS…SSKYLYVCQY (127 aa)). The Zn(2+) site is built by Thr51 and Ser106. 8 disulfides stabilise this stretch: Cys75–Cys153, Cys92–Cys165, Cys148–Cys162, Cys184–Cys191, Cys187–Cys196, Cys200–Cys233, Cys209–Cys227, and Cys218–Cys231. A ShKT domain is found at 200–233 (CKRNNDFSNCKSLAKKSKCQTEWIKKKCPASCFC).

In terms of tissue distribution, expressed by the venom gland.

The protein localises to the secreted. Functionally, blocks olfactory (CNGA2) and retinal (CNGA1) cyclic nucleotide-gated (CNG) ion channel currents. Does not inhibit retinal (CNGA3) currents. It forms high-affinity contacts with the pore turret region and most likely inhibits CNG channel current by blocking the external entrance to the transmembrane pore. Is really more potent that Pseudecin. Does not affect neither depolarization- nor caffeine-induced contraction arterial smooth muscle. The sequence is that of Cysteine-rich venom protein pseudechetoxin from Pseudechis australis (Mulga snake).